Reading from the N-terminus, the 176-residue chain is Endoribonuclease YbeY (176 aa).

3 residues coordinate Zn(2+): His-128, His-132, and His-138.

Belongs to the endoribonuclease YbeY family. Requires Zn(2+) as cofactor.

It is found in the cytoplasm. Single strand-specific metallo-endoribonuclease involved in late-stage 70S ribosome quality control and in maturation of the 3' terminus of the 16S rRNA. In Zymomonas mobilis subsp. mobilis (strain ATCC 31821 / ZM4 / CP4), this protein is Endoribonuclease YbeY.